The chain runs to 434 residues: Alpha-enolase (434 aa).

Residue serine 40 participates in Mg(2+) binding. Residues histidine 158 and glutamate 167 each coordinate substrate. Glutamate 210 (proton donor) is an active-site residue. Aspartate 245, glutamate 293, and aspartate 318 together coordinate Mg(2+). Residues glutamate 293 and aspartate 318 each contribute to the substrate site. The Proton acceptor role is filled by lysine 343. Substrate-binding positions include 370–373 (SHRS) and lysine 394.

It belongs to the enolase family. In terms of assembly, homodimer. Mg(2+) serves as cofactor.

The protein localises to the cytoplasm. The catalysed reaction is (2R)-2-phosphoglycerate = phosphoenolpyruvate + H2O. It participates in carbohydrate degradation; glycolysis; pyruvate from D-glyceraldehyde 3-phosphate: step 4/5. Functionally, both an enzyme and a lens structural protein. This chain is Alpha-enolase (ENO1), found in Anas platyrhynchos (Mallard).